The following is a 279-amino-acid chain: NADH dehydrogenase [ubiquinone] iron-sulfur protein 3, mitochondrial (279 aa).

The transit peptide at 1–27 (MISRTLLKRSLPTVQFLRPFTRSSIRR) directs the protein to the mitochondrion. The disordered stretch occupies residues 249-279 (EPVGEGKDFTPESFKLPTPEPEPEKESDEKK). The segment covering 270–279 (EPEKESDEKK) has biased composition (basic and acidic residues).

Belongs to the complex I 30 kDa subunit family. As to quaternary structure, core subunit of respiratory chain NADH dehydrogenase (Complex I).

The protein resides in the mitochondrion inner membrane. It carries out the reaction a ubiquinone + NADH + 5 H(+)(in) = a ubiquinol + NAD(+) + 4 H(+)(out). Its function is as follows. Core subunit of the mitochondrial membrane respiratory chain NADH dehydrogenase (Complex I) which catalyzes electron transfer from NADH through the respiratory chain, using ubiquinone as an electron acceptor. Plays a role in cell wall integrity and is involved in osmotic and oxidative resistance, yeast to hypha transition and the ability to damage and invade oral epithelial cells. This Candida albicans (strain SC5314 / ATCC MYA-2876) (Yeast) protein is NADH dehydrogenase [ubiquinone] iron-sulfur protein 3, mitochondrial (ALI1).